We begin with the raw amino-acid sequence, 234 residues long: Glutathione S-transferase sirG (234 aa).

The 85-residue stretch at 15-99 (LYVVKATPTS…YLTDAYDHEG (85 aa)) folds into the GST N-terminal domain. The GST C-terminal domain maps to 105 to 230 (DLWERTQVNN…KALSQKFRPS (126 aa)).

Belongs to the GST superfamily.

It carries out the reaction RX + glutathione = an S-substituted glutathione + a halide anion + H(+). It participates in mycotoxin biosynthesis. In terms of biological role, glutathione S-transferase; part of the gene cluster that mediates the biosynthesis of sirodesmin PL, an epipolythiodioxopiperazine (ETP) characterized by a disulfide bridged cyclic dipeptide and that acts as a phytotoxin which is involved in the blackleg didease of canola. SirD catalyzes the O-prenylation of L-tyrosine (L-Tyr) in the presence of dimethylallyl diphosphate (DMAPP) to yield 4-O-dimethylallyl-L-Tyr, and therefore represents probably the first pathway-specific enzyme in the biosynthesis of sirodesmin PL. 4-O-dimethylallyl-L-Tyr, then undergoes condensation with L-Ser in a reaction catalyzed by the non-ribosomal peptide synthase sirP to form the diketopiperazine (DKP) backbone. Further bishydroxylation of the DKP performed by the cytochrome P450 monooxygenase sirC leads to the production of the intermediate phomamide. This step is essential to form the reactive thiol group required for toxicity of sirodesmin PL. The next steps of sirodesmin biosynthesis are not well understood yet, but some predictions could be made from intermediate compounds identification. Phomamide is converted into phomalizarine via oxidation, probably by sirT. Further oxidation, methylation (by sirM or sirN) and reduction steps convert phomalizarine to deacetyl sirodesmin. Finally, acetyltransferase sirH probably acetylates deacetyl sirodesmin to produce sirodesmin PL. In Leptosphaeria maculans (Blackleg fungus), this protein is Glutathione S-transferase sirG.